Consider the following 95-residue polypeptide: MAFDQDTVRRTAHLARIALPQAEIPAVADQLERIMGLVEELRAIETTDVPIMAHPLDLDQPLRPDMVVHQDQREVLMASAPAAEHGLFLVPKVIE.

It belongs to the GatC family. As to quaternary structure, heterotrimer of A, B and C subunits.

It catalyses the reaction L-glutamyl-tRNA(Gln) + L-glutamine + ATP + H2O = L-glutaminyl-tRNA(Gln) + L-glutamate + ADP + phosphate + H(+). It carries out the reaction L-aspartyl-tRNA(Asn) + L-glutamine + ATP + H2O = L-asparaginyl-tRNA(Asn) + L-glutamate + ADP + phosphate + 2 H(+). Its function is as follows. Allows the formation of correctly charged Asn-tRNA(Asn) or Gln-tRNA(Gln) through the transamidation of misacylated Asp-tRNA(Asn) or Glu-tRNA(Gln) in organisms which lack either or both of asparaginyl-tRNA or glutaminyl-tRNA synthetases. The reaction takes place in the presence of glutamine and ATP through an activated phospho-Asp-tRNA(Asn) or phospho-Glu-tRNA(Gln). The polypeptide is Aspartyl/glutamyl-tRNA(Asn/Gln) amidotransferase subunit C (Acidithiobacillus ferrooxidans (strain ATCC 23270 / DSM 14882 / CIP 104768 / NCIMB 8455) (Ferrobacillus ferrooxidans (strain ATCC 23270))).